The sequence spans 367 residues: MTNELKRTPLFEEYAKYGAKTVDFGGWELPVQFSSIKDEHDAVRNRAGLFDVSHMGEILVTGPDALNFLQNLLSNDVSKIATGQAQYTAMCYENGGVVDDLLTYKLADDHYLLCVNAANIEKDYDWMLENQHQYDVTIDNQSDAYAQIALQGPLAEEVLQSLTSTDVSAIKFFRFQENVEVTGHKVLVSRSGYTGEDGFELYGAPEDIKALWGKILDAGQDKGVVPAGLGCRDTLRFEAGLPLYGQELSATISPLEAGIGFAVKLNKEDFIGHDALVAQKENGLPRKLVGIEMIDKGIPRHGYKVFKDGKEIGEVTTGTQLPSSKRNVGHALIDSQFATIGNEMEIEIRGKQLKVVTVETPFYKRSK.

This sequence belongs to the GcvT family. As to quaternary structure, the glycine cleavage system is composed of four proteins: P, T, L and H.

The enzyme catalyses N(6)-[(R)-S(8)-aminomethyldihydrolipoyl]-L-lysyl-[protein] + (6S)-5,6,7,8-tetrahydrofolate = N(6)-[(R)-dihydrolipoyl]-L-lysyl-[protein] + (6R)-5,10-methylene-5,6,7,8-tetrahydrofolate + NH4(+). The glycine cleavage system catalyzes the degradation of glycine. The polypeptide is Aminomethyltransferase (Lysinibacillus sphaericus (strain C3-41)).